The following is a 232-amino-acid chain: Sec-independent protein translocase protein TatB (232 aa).

A helical transmembrane segment spans residues 1 to 21 (MFDIGFGELMLLFVIGLVVLG). Disordered regions lie at residues 108–129 (EPHT…GVTP) and 176–232 (AAST…NNDR). Composition is skewed to low complexity over residues 189 to 203 (ADSA…ATPA) and 214 to 232 (RAAT…NNDR).

Belongs to the TatB family. As to quaternary structure, the Tat system comprises two distinct complexes: a TatABC complex, containing multiple copies of TatA, TatB and TatC subunits, and a separate TatA complex, containing only TatA subunits. Substrates initially bind to the TatABC complex, which probably triggers association of the separate TatA complex to form the active translocon.

Its subcellular location is the cell inner membrane. In terms of biological role, part of the twin-arginine translocation (Tat) system that transports large folded proteins containing a characteristic twin-arginine motif in their signal peptide across membranes. Together with TatC, TatB is part of a receptor directly interacting with Tat signal peptides. TatB may form an oligomeric binding site that transiently accommodates folded Tat precursor proteins before their translocation. The polypeptide is Sec-independent protein translocase protein TatB (Sodalis glossinidius (strain morsitans)).